Reading from the N-terminus, the 885-residue chain is Leucine--tRNA ligase (885 aa).

The short motif at 46-56 is the 'HIGH' region element; it reads PYPSGALHMGH. Residues 638-642 carry the 'KMSKS' region motif; the sequence is KMSKS. Lys-641 contributes to the ATP binding site.

Belongs to the class-I aminoacyl-tRNA synthetase family.

Its subcellular location is the cytoplasm. The enzyme catalyses tRNA(Leu) + L-leucine + ATP = L-leucyl-tRNA(Leu) + AMP + diphosphate. The chain is Leucine--tRNA ligase from Xanthomonas campestris pv. campestris (strain B100).